Consider the following 449-residue polypeptide: Capsid protein (449 aa).

A DNA-binding region spans residues 1 to 43 (MERRARRPRGRFYAFRRGRWNHLKRLRRRYKFRHRRRQRYRRR). Residues 6–47 (RRPRGRFYAFRRGRWNHLKRLRRRYKFRHRRRQRYRRRAFRK) form a nuclear localization signals region.

This sequence belongs to the gyrovirus capsid protein family. Homomultimer (Potential). Interacts with Rep; this interaction relocates Rep into the nucleus.

Its subcellular location is the host nucleus. The protein localises to the virion. Its function is as follows. Self-assembles to form the virion icosahedral capsid with a T=1 symmetry. This very small capsid (25 nm in diameter) allows the virus to be very stable in the environment and resistant to some disinfectants, including detergents. Essential for the initial attachment to host receptors. After attachment, the virus is endocytosed and traffics to the nucleus. The capsid protein binds and transports the viral genome and Rep across the nuclear envelope. This chain is Capsid protein (VP1), found in Chicken anemia virus (isolate Japan 82-2) (CAV).